Reading from the N-terminus, the 364-residue chain is Metalloendoproteinase 1-MMP (364 aa).

A signal peptide spans 1-28; that stretch reads MSRNLIYRRNRALCFVLILFCFPYRFGA. Positions 29-149 are cleaved as a propeptide — activation peptide; sequence RNTPEAEQST…NNDFLHTTAH (121 aa). Asn49 is a glycosylation site (N-linked (GlcNAc...) asparagine). The Cysteine switch signature appears at 128–135; it reads PRCGVSDT. Cys130 is a binding site for Zn(2+). Asp211 is a binding site for Ca(2+). Zn(2+)-binding residues include His221 and Asp223. Ca(2+) contacts are provided by Asp228 and Gly229. His236 lines the Zn(2+) pocket. Gly243 lines the Ca(2+) pocket. His246 contacts Zn(2+). Ca(2+)-binding residues include Asp248 and Glu251. Zn(2+) is bound at residue His275. Glu276 is a catalytic residue. Positions 279 and 285 each coordinate Zn(2+). N-linked (GlcNAc...) asparagine glycosylation is present at Asn338. Gly339 is lipidated: GPI-anchor amidated glycine. Residues 340–364 constitute a propeptide, removed in mature form; that stretch reads TVSHRFLSGNFIGYVLLVVGLILFL.

This sequence belongs to the peptidase M10A family. Matrix metalloproteinases (MMPs) subfamily. Requires Ca(2+) as cofactor. Zn(2+) serves as cofactor. In terms of tissue distribution, mostly expressed in flowers, roots and stems, and, to a lower extent, in leaves.

Its subcellular location is the cell membrane. With respect to regulation, inhibited by human TIMP-1 and TIMP-2 and by the peptide hydroxamate inhibitor (BB-94). Repressed by acetohydroxamic acid (AHA). Functionally, matrix metalloproteinases (MMPs) or matrixins may play a role in the degradation and remodeling of the extracellular matrix (ECM) during development or in response to stresses. Can cleave myelin basic protein as well as fluorigenic peptide substrates, McaPLANvaDpaAR-NH(2) and McaPChaGNvaHADpa-NH(2) 4-fold more efficiently than McaPLGLDpaAR-NH(2) (QF24). Active on myelin basic protein (MBP) and, to some extent, on McaPLGLDpaAR-NH(2) (QF24) and beta-casein. In Arabidopsis thaliana (Mouse-ear cress), this protein is Metalloendoproteinase 1-MMP.